The primary structure comprises 109 residues: Flagellar hook-basal body complex protein FliE (109 aa).

This sequence belongs to the FliE family.

It localises to the bacterial flagellum basal body. This is Flagellar hook-basal body complex protein FliE from Pseudomonas paraeruginosa (strain DSM 24068 / PA7) (Pseudomonas aeruginosa (strain PA7)).